Here is a 332-residue protein sequence, read N- to C-terminus: Succinylglutamate desuccinylase (332 aa).

Zn(2+) is bound by residues His-59, Glu-62, and His-151. Residue Glu-215 is part of the active site.

Belongs to the AspA/AstE family. Succinylglutamate desuccinylase subfamily. Zn(2+) serves as cofactor.

The catalysed reaction is N-succinyl-L-glutamate + H2O = L-glutamate + succinate. Its pathway is amino-acid degradation; L-arginine degradation via AST pathway; L-glutamate and succinate from L-arginine: step 5/5. Functionally, transforms N(2)-succinylglutamate into succinate and glutamate. The protein is Succinylglutamate desuccinylase of Pseudomonas paraeruginosa (strain DSM 24068 / PA7) (Pseudomonas aeruginosa (strain PA7)).